The primary structure comprises 180 residues: Large ribosomal subunit protein uL6 (180 aa).

Belongs to the universal ribosomal protein uL6 family. As to quaternary structure, part of the 50S ribosomal subunit.

In terms of biological role, this protein binds to the 23S rRNA, and is important in its secondary structure. It is located near the subunit interface in the base of the L7/L12 stalk, and near the tRNA binding site of the peptidyltransferase center. The polypeptide is Large ribosomal subunit protein uL6 (Protochlamydia amoebophila (strain UWE25)).